A 403-amino-acid chain; its full sequence is Bifunctional enzyme IspD/IspF (403 aa).

Positions 1–234 are 2-C-methyl-D-erythritol 4-phosphate cytidylyltransferase; sequence MPTSKRTAAI…ARLAAMLGDI (234 aa). Residues 235 to 403 form a 2-C-methyl-D-erythritol 2,4-cyclodiphosphate synthase region; it reads RTGTGYDVHA…SDQEDKGWST (169 aa). Residues Asp-241 and His-243 each coordinate a divalent metal cation. 4-CDP-2-C-methyl-D-erythritol 2-phosphate contacts are provided by residues 241 to 243 and 267 to 268; these read DVH and HS. His-275 provides a ligand contact to a divalent metal cation. Residues 289 to 291, 365 to 368, Phe-372, and Arg-375 each bind 4-CDP-2-C-methyl-D-erythritol 2-phosphate; these read DIG and TTSE.

In the N-terminal section; belongs to the IspD/TarI cytidylyltransferase family. IspD subfamily. This sequence in the C-terminal section; belongs to the IspF family. A divalent metal cation is required as a cofactor.

It catalyses the reaction 2-C-methyl-D-erythritol 4-phosphate + CTP + H(+) = 4-CDP-2-C-methyl-D-erythritol + diphosphate. It carries out the reaction 4-CDP-2-C-methyl-D-erythritol 2-phosphate = 2-C-methyl-D-erythritol 2,4-cyclic diphosphate + CMP. It participates in isoprenoid biosynthesis; isopentenyl diphosphate biosynthesis via DXP pathway; isopentenyl diphosphate from 1-deoxy-D-xylulose 5-phosphate: step 2/6. Its pathway is isoprenoid biosynthesis; isopentenyl diphosphate biosynthesis via DXP pathway; isopentenyl diphosphate from 1-deoxy-D-xylulose 5-phosphate: step 4/6. Its function is as follows. Bifunctional enzyme that catalyzes the formation of 4-diphosphocytidyl-2-C-methyl-D-erythritol from CTP and 2-C-methyl-D-erythritol 4-phosphate (MEP) (IspD), and catalyzes the conversion of 4-diphosphocytidyl-2-C-methyl-D-erythritol 2-phosphate (CDP-ME2P) to 2-C-methyl-D-erythritol 2,4-cyclodiphosphate (ME-CPP) with a corresponding release of cytidine 5-monophosphate (CMP) (IspF). The protein is Bifunctional enzyme IspD/IspF of Nitrobacter hamburgensis (strain DSM 10229 / NCIMB 13809 / X14).